The chain runs to 62 residues: Photosystem II reaction center protein Z (62 aa).

2 consecutive transmembrane segments (helical) span residues 8–28 (AVFA…VVFA) and 41–61 (FSGT…NSLI).

Belongs to the PsbZ family. As to quaternary structure, PSII is composed of 1 copy each of membrane proteins PsbA, PsbB, PsbC, PsbD, PsbE, PsbF, PsbH, PsbI, PsbJ, PsbK, PsbL, PsbM, PsbT, PsbY, PsbZ, Psb30/Ycf12, at least 3 peripheral proteins of the oxygen-evolving complex and a large number of cofactors. It forms dimeric complexes.

It is found in the plastid. The protein resides in the chloroplast thylakoid membrane. Its function is as follows. May control the interaction of photosystem II (PSII) cores with the light-harvesting antenna, regulates electron flow through the 2 photosystem reaction centers. PSII is a light-driven water plastoquinone oxidoreductase, using light energy to abstract electrons from H(2)O, generating a proton gradient subsequently used for ATP formation. The polypeptide is Photosystem II reaction center protein Z (Coffea arabica (Arabian coffee)).